A 246-amino-acid polypeptide reads, in one-letter code: DNA repair protein RecO (246 aa).

It belongs to the RecO family.

Functionally, involved in DNA repair and RecF pathway recombination. In Proteus mirabilis (strain HI4320), this protein is DNA repair protein RecO.